A 690-amino-acid polypeptide reads, in one-letter code: Kelch-like protein 8 (690 aa).

The region spanning 111–178 (CDVELLVAGS…IYTDKIAITM (68 aa)) is the BTB domain. In terms of domain architecture, BACK spans 213–314 (CMSLYHFSDI…VGWNFLCEAV (102 aa)). Kelch repeat units follow at residues 383 to 430 (AIFC…SANG), 431 to 477 (NLYA…SIEN), 478 to 524 (VIYA…VIGR), 525 to 571 (YLFA…VLDG), 572 to 618 (YLYA…ALGG), and 620 to 665 (VYAI…WANV).

Component of the BCR(kel-8) E3 ubiquitin ligase complex, at least composed of cul-3, kel-8 and rbx-1. Interacts with rpy-1. As to expression, expressed in neurons.

It localises to the synapse. The protein operates within protein modification; protein ubiquitination. Its function is as follows. Substrate-specific adapter of a BCR (BTB-CUL3-RBX1) E3 ubiquitin ligase complex that regulates degradation of glutamate receptors in neurons. The BCR(kel-8) ubiquitin ligase complex mediates ubiquitination and subsequent degradation of rpy-1. Indirectly regulates the protein turnover of glr-1, possibly via ubiquitination and degradation of rpy-1. In Caenorhabditis elegans, this protein is Kelch-like protein 8 (kel-8).